Consider the following 429-residue polypeptide: Ribosomal RNA small subunit methyltransferase B (429 aa).

S-adenosyl-L-methionine is bound by residues 254–260 (CAAPGGK), aspartate 277, aspartate 303, and aspartate 322. Catalysis depends on cysteine 375, which acts as the Nucleophile.

Belongs to the class I-like SAM-binding methyltransferase superfamily. RsmB/NOP family.

It localises to the cytoplasm. It carries out the reaction cytidine(967) in 16S rRNA + S-adenosyl-L-methionine = 5-methylcytidine(967) in 16S rRNA + S-adenosyl-L-homocysteine + H(+). In terms of biological role, specifically methylates the cytosine at position 967 (m5C967) of 16S rRNA. This Escherichia coli O127:H6 (strain E2348/69 / EPEC) protein is Ribosomal RNA small subunit methyltransferase B.